Here is a 160-residue protein sequence, read N- to C-terminus: Xanthine-guanine phosphoribosyltransferase (160 aa).

5-phospho-alpha-D-ribose 1-diphosphate is bound by residues Arg41–Gly42 and Asp93–Thr101. Asp94 contributes to the Mg(2+) binding site. Asp97 and Ile140 together coordinate guanine. Positions 97 and 140 each coordinate xanthine. Residues Asp97 to Thr101 and Trp139 to Ile140 contribute to the GMP site.

The protein belongs to the purine/pyrimidine phosphoribosyltransferase family. XGPT subfamily. In terms of assembly, homotetramer. Mg(2+) serves as cofactor.

It is found in the cell inner membrane. The enzyme catalyses GMP + diphosphate = guanine + 5-phospho-alpha-D-ribose 1-diphosphate. It catalyses the reaction XMP + diphosphate = xanthine + 5-phospho-alpha-D-ribose 1-diphosphate. It carries out the reaction IMP + diphosphate = hypoxanthine + 5-phospho-alpha-D-ribose 1-diphosphate. Its pathway is purine metabolism; GMP biosynthesis via salvage pathway; GMP from guanine: step 1/1. It participates in purine metabolism; XMP biosynthesis via salvage pathway; XMP from xanthine: step 1/1. Purine salvage pathway enzyme that catalyzes the transfer of the ribosyl-5-phosphate group from 5-phospho-alpha-D-ribose 1-diphosphate (PRPP) to the N9 position of the 6-oxopurines guanine and xanthine to form the corresponding ribonucleotides GMP (guanosine 5'-monophosphate) and XMP (xanthosine 5'-monophosphate), with the release of PPi. To a lesser extent, also acts on hypoxanthine. The polypeptide is Xanthine-guanine phosphoribosyltransferase (Desulfotalea psychrophila (strain LSv54 / DSM 12343)).